A 1146-amino-acid polypeptide reads, in one-letter code: Cell division cycle and apoptosis regulator protein 1 (1146 aa).

Positions 1-246 (MAQFGGQKNP…AQPQPQSLLQ (246 aa)) are interaction with AR. Residues 200 to 657 (QRIQTLPNQN…RALSSKGLKS (458 aa)) are interaction with GATA2. The tract at residues 282–351 (IVSQPQPARR…RRERERSPRR (70 aa)) is disordered. Composition is skewed to basic and acidic residues over residues 290-331 (RRLD…ERSP) and 338-349 (ERSPRRERERSP). A Phosphoserine modification is found at Ser453. The stretch at 591 to 615 (KQQLVEKLQGERKKADGEQDEEEKD) forms a coiled coil. The disordered stretch occupies residues 599-635 (QGERKKADGEQDEEEKDDGEVKEIATPTHWSKLDPKA). The segment covering 608-618 (EQDEEEKDDGE) has biased composition (acidic residues). The residue at position 624 (Thr624) is a Phosphothreonine. The 35-residue stretch at 633 to 667 (PKAMKVNDLRKELESRALSSKGLKSQLIARLTKQL) folds into the SAP domain. A Glycyl lysine isopeptide (Lys-Gly) (interchain with G-Cter in ubiquitin) cross-link involves residue Lys634. Residues 640–1146 (DLRKELESRA…EKSKENGSGV (507 aa)) are interaction with GATA1. Thr664 bears the Phosphothreonine mark. Basic and acidic residues-rich tracts occupy residues 671 to 684 (EQKE…KSEK), 691 to 716 (DKKS…RQER), 793 to 814 (KEDK…KKEE), and 829 to 852 (SGDD…KDDS). Disordered stretches follow at residues 671 to 716 (EQKE…RQER) and 793 to 912 (KEDK…KEKP). Phosphoserine is present on residues Ser682 and Ser694. Acidic residues predominate over residues 853-884 (KDDDETEEDNNQDEYDPMEAEEAEDEDDDREE). Phosphothreonine is present on Thr858. Over residues 885-912 (EEVKRDDKRDVSRYCKDRPAKDKEKEKP) the composition is skewed to basic and acidic residues. Lys1008 is covalently cross-linked (Glycyl lysine isopeptide (Lys-Gly) (interchain with G-Cter in SUMO1); alternate). Lys1008 participates in a covalent cross-link: Glycyl lysine isopeptide (Lys-Gly) (interchain with G-Cter in SUMO2); alternate. Positions 1029–1110 (DVGSLLQKLE…LQFENQLNKT (82 aa)) form a coiled coil. Residues Lys1063 and Lys1131 each participate in a glycyl lysine isopeptide (Lys-Gly) (interchain with G-Cter in SUMO2) cross-link.

In terms of assembly, directly interacts with ESR1, NR3C1 and p53/TP53. Interacts (via N-terminus) with CALCOCO1. Interacts with MED1 and GATA1. Interacts with AR and GATA2.

Its subcellular location is the cytoplasm. It localises to the perinuclear region. Functionally, associates with components of the Mediator and p160 coactivator complexes that play a role as intermediaries transducing regulatory signals from upstream transcriptional activator proteins to basal transcription machinery at the core promoter. Recruited to endogenous nuclear receptor target genes in response to the appropriate hormone. Also functions as a p53 coactivator. May thus play an important role in transcriptional regulation. May be involved in apoptosis signaling in the presence of the retinoid CD437. Apoptosis induction involves sequestration of 14-3-3 protein(s) and mediated altered expression of multiple cell cycle regulatory genes including MYC, CCNB1 and CDKN1A. Plays a role in cell cycle progression and/or cell proliferation. In association with CALCOCO1 enhances GATA1- and MED1-mediated transcriptional activation from the gamma-globin promoter during erythroid differentiation of K562 erythroleukemia cells. Can act as a both a coactivator and corepressor of AR-mediated transcription. Contributes to chromatin looping and AR transcription complex assembly by stabilizing AR-GATA2 association on chromatin and facilitating MED1 and RNA polymerase II recruitment to AR-binding sites. May play an important role in the growth and tumorigenesis of prostate cancer cells. This chain is Cell division cycle and apoptosis regulator protein 1 (Ccar1), found in Mus musculus (Mouse).